The chain runs to 352 residues: uncharacterized protein (352 aa).

This is an uncharacterized protein from Acanthamoeba polyphaga mimivirus (APMV).